The primary structure comprises 455 residues: MLAVSPAMCPDIEDRAAVAGDAGMEVVGMSSDDMDQFDFSVDDIDFGDFFLRLEDGDVLPDLEVDPAEIFTDFEAIATSGGEGVQDQEVPTVELLAPADDVGVLDPCGDVVVGEENAAFAGAGEEKGGCNQDDDAGEANVDDGAAAVEAKSSSPSSTTSSSQEAESRHKSSSKSSHGKKKAKVDWTPELHRRFVQAVEQLGIDKAVPSRILEIMGIDSLTRHNIASHLQKYRSHRKHMIAREAEAASWTQRRQIYAAGGGAVAKRPESNAWTVPTIGFPPPPPPPPSPAPIQHFARPLHVWGHPTMDPSRVPVWPPRHLVPRGPAPPWVPPPPPSDPAFWHHPYMRGPAHVPTQGTPCMAMPMPAARFPAPPVPGVVPCPMYRPLTPPALASKNQQDAQLQLQVQPSSESIDAAIGDVLSKPWLPLPLGLKPPSVDSVMGELQRQGVANVPPACG.

A compositionally biased stretch (low complexity) spans 145 to 163; it reads AAVEAKSSSPSSTTSSSQE. Positions 145 to 183 are disordered; sequence AAVEAKSSSPSSTTSSSQEAESRHKSSSKSSHGKKKAKV. Residues 169–181 are compositionally biased toward basic residues; that stretch reads KSSSKSSHGKKKA. The HTH myb-type domain maps to 177 to 236; the sequence is GKKKAKVDWTPELHRRFVQAVEQLGIDKAVPSRILEIMGIDSLTRHNIASHLQKYRSHRK. The H-T-H motif DNA-binding region spans 207 to 232; the sequence is PSRILEIMGIDSLTRHNIASHLQKYR.

As to expression, expressed in leaves.

It is found in the nucleus. Its function is as follows. Probable transcriptional activator that promotes chloroplast development. Acts as an activator of nuclear photosynthetic genes involved in chlorophyll biosynthesis, light harvesting, and electron transport. The protein is Probable transcription factor GLK1 (GLK1) of Oryza sativa subsp. japonica (Rice).